Reading from the N-terminus, the 118-residue chain is Large ribosomal subunit protein bL20 (118 aa).

This sequence belongs to the bacterial ribosomal protein bL20 family.

Its function is as follows. Binds directly to 23S ribosomal RNA and is necessary for the in vitro assembly process of the 50S ribosomal subunit. It is not involved in the protein synthesizing functions of that subunit. This Psychrobacter arcticus (strain DSM 17307 / VKM B-2377 / 273-4) protein is Large ribosomal subunit protein bL20.